The sequence spans 93 residues: Defensin 5 (93 aa).

Residues 1–19 (MKKLVLLSALVLLALQVEA) form the signal peptide. Residues 20 to 58 (EPTPKTDEGTKTDEQPGKEDQVVSVSIEGQGDPAFQDAV) constitute a propeptide that is removed on maturation. 3 disulfides stabilise this stretch: C64/C92, C66/C81, and C71/C91.

This sequence belongs to the alpha-defensin family. As to expression, small intestine. Not present in heart, liver, spleen, kidney, large intestine and colon.

The protein resides in the secreted. Functionally, probably contributes to the antimicrobial barrier function of the small intestine. In Rattus norvegicus (Rat), this protein is Defensin 5.